The following is a 1264-amino-acid chain: TBC1 domain family member 9 (1264 aa).

GRAM domains lie at Val-146–Ala-213 and Glu-293–Asp-361. The disordered stretch occupies residues Lys-410 to Val-456. The span at Ser-425 to Ser-441 shows a compositional bias: low complexity. In terms of domain architecture, Rab-GAP TBC spans Gly-515–Gly-702. The EF-hand domain maps to His-886 to Gly-921. A compositionally biased stretch (basic and acidic residues) spans Ser-1119–Pro-1138. The interval Ser-1119–Ser-1162 is disordered.

May act as a GTPase-activating protein for Rab family protein(s). This Mus musculus (Mouse) protein is TBC1 domain family member 9 (Tbc1d9).